A 367-amino-acid chain; its full sequence is MAAAGAGSGRAAVSRSRPPPARFRGCLAGALLGDCLGAVFEGRSVVKLPDLLSFLRGLEPPGGEGEPAGSARRETLSYTDDTAMSRCVVQSLLAKREFDEVDMAKRFAEEYKKEPNRGYGMAVVNVFKKLLSPQCSDVFEPARAQFNGKGSYGNGGAMRVAGIPLTYSDVQDVKKFAKLSAELTHANSLGYNGAILQALAVHLALQGEVSRETFLEQLISHMEDIEADDKSLTDARALGFEDLPFSRRLKKIKEFLELSSVPKEDVLFELGNGIAALRSVPTAIYSFLRCMEADPDIPEHYNNLQRTIIYCISLGGDTNTIATMAGAIAGAYYGEEQVPPSWEQSCEAFQETQKMANSLHELYCQQL.

Residues Glu41, Thr79, Asp80, and Asp81 each contribute to the Mg(2+) site. Asp80 contacts substrate. Substrate-binding positions include 149-155 (KGSYGNG), His185, Leu238, and Ile274. Mg(2+)-binding residues include Asp317 and Thr320.

Belongs to the ADP-ribosylglycohydrolase family. As to quaternary structure, monomer. Requires Mg(2+) as cofactor.

It localises to the nucleus. It is found in the cytoplasm. The protein resides in the chromosome. Its subcellular location is the mitochondrion matrix. The catalysed reaction is [(1''-&gt;2')-ADP-alpha-D-ribose](n) + H2O = [(1''-&gt;2')-ADP-alpha-D-ribose](n-1) + ADP-D-ribose. It catalyses the reaction 1''-O-acetyl-ADP-alpha-D-ribose + H2O = ADP-D-ribose + acetate + H(+). The enzyme catalyses O-(ADP-D-ribosyl)-L-seryl-[protein] + H2O = ADP-D-ribose + L-seryl-[protein]. It carries out the reaction alpha-NAD(+) + H2O = ADP-D-ribose + nicotinamide + H(+). With respect to regulation, the protein undergoes a dramatic conformational switch from closed to open states upon substrate-binding, which enables specific substrate recognition for the 1''-O-linkage. The glutamate flap (Glu-41) blocks substrate entrance to Mg(2+) in the unliganded closed state. In presence of substrate, Glu-41 is ejected from the active site: this closed-to-open transition significantly widens the substrate-binding channel and precisely positions the scissile 1''-O-linkage for cleavage while securing tightly 2'- and 3'-hydroxyls of ADP-ribose. Its function is as follows. ADP-ribosylhydrolase that preferentially hydrolyzes the scissile alpha-O-linkage attached to the anomeric C1'' position of ADP-ribose and acts on different substrates, such as proteins ADP-ribosylated on serine and threonine, free poly(ADP-ribose) and O-acetyl-ADP-D-ribose. Specifically acts as a serine mono-ADP-ribosylhydrolase by mediating the removal of mono-ADP-ribose attached to serine residues on proteins, thereby playing a key role in DNA damage response. Serine ADP-ribosylation of proteins constitutes the primary form of ADP-ribosylation of proteins in response to DNA damage. Does not hydrolyze ADP-ribosyl-arginine, -cysteine, -diphthamide, or -asparagine bonds. Also able to degrade protein free poly(ADP-ribose), which is synthesized in response to DNA damage: free poly(ADP-ribose) acts as a potent cell death signal and its degradation by ADPRHL2 protects cells from poly(ADP-ribose)-dependent cell death, a process named parthanatos. Also hydrolyzes free poly(ADP-ribose) in mitochondria. Specifically digests O-acetyl-ADP-D-ribose, a product of deacetylation reactions catalyzed by sirtuins. Specifically degrades 1''-O-acetyl-ADP-D-ribose isomer, rather than 2''-O-acetyl-ADP-D-ribose or 3''-O-acetyl-ADP-D-ribose isomers. The chain is ADP-ribosylhydrolase ARH3 (ADPRS) from Gallus gallus (Chicken).